A 307-amino-acid polypeptide reads, in one-letter code: Homoserine O-acetyltransferase (307 aa).

Cys-142 acts as the Acyl-thioester intermediate in catalysis. Substrate contacts are provided by Lys-163 and Ser-192. The Proton acceptor role is filled by His-235. The active site involves Glu-237. Substrate is bound at residue Arg-249.

The protein belongs to the MetA family.

It is found in the cytoplasm. It catalyses the reaction L-homoserine + acetyl-CoA = O-acetyl-L-homoserine + CoA. The protein operates within amino-acid biosynthesis; L-methionine biosynthesis via de novo pathway; O-acetyl-L-homoserine from L-homoserine: step 1/1. Functionally, transfers an acetyl group from acetyl-CoA to L-homoserine, forming acetyl-L-homoserine. The protein is Homoserine O-acetyltransferase of Sinorhizobium fredii (strain NBRC 101917 / NGR234).